Consider the following 496-residue polypeptide: NADH-ubiquinone oxidoreductase 51 kDa subunit, mitochondrial (496 aa).

Residues 1-30 (MISRAAAPSSSIASLSSRSLRAQAPAARSF) constitute a mitochondrion transit peptide. Position 98–107 (98–107 (GRGGAGFPSG)) interacts with NAD(+). 214 to 261 (GMGAYVCGEETSLIESIEGKAGKPRLKPPFPAAVGLFGCPSTVTNVET) contacts FMN. Cys-393, Cys-396, Cys-399, and Cys-439 together coordinate [4Fe-4S] cluster.

This sequence belongs to the complex I 51 kDa subunit family. As to quaternary structure, complex I is composed of about 40 different subunits. This is a component of the flavoprotein-sulfur (FP) fragment of the enzyme. FMN is required as a cofactor. It depends on [4Fe-4S] cluster as a cofactor.

The protein localises to the mitochondrion inner membrane. The enzyme catalyses a ubiquinone + NADH + 5 H(+)(in) = a ubiquinol + NAD(+) + 4 H(+)(out). Core subunit of the mitochondrial membrane respiratory chain NADH dehydrogenase (Complex I) that is believed to belong to the minimal assembly required for catalysis. Complex I functions in the transfer of electrons from NADH to the respiratory chain. The immediate electron acceptor for the enzyme is believed to be ubiquinone. The polypeptide is NADH-ubiquinone oxidoreductase 51 kDa subunit, mitochondrial (NUO51) (Aspergillus niger).